A 261-amino-acid chain; its full sequence is Glucose 1-dehydrogenase A (261 aa).

11–35 (VITGGSTGLGRAMAVRFGQEEAKVV) lines the NADP(+) pocket. Residue S145 coordinates substrate. The active-site Proton acceptor is the Y158.

This sequence belongs to the short-chain dehydrogenases/reductases (SDR) family. As to quaternary structure, homotetramer.

It carries out the reaction D-glucose + NAD(+) = D-glucono-1,5-lactone + NADH + H(+). The catalysed reaction is D-glucose + NADP(+) = D-glucono-1,5-lactone + NADPH + H(+). This is Glucose 1-dehydrogenase A (gdhA) from Priestia megaterium (Bacillus megaterium).